A 159-amino-acid polypeptide reads, in one-letter code: 6,7-dimethyl-8-ribityllumazine synthase (159 aa).

5-amino-6-(D-ribitylamino)uracil-binding positions include Trp27, 62 to 64, and 86 to 88; these read SWE and VLI. (2S)-2-hydroxy-3-oxobutyl phosphate is bound at residue 91–92; that stretch reads ST. His94 (proton donor) is an active-site residue. A 5-amino-6-(D-ribitylamino)uracil-binding site is contributed by Leu119. (2S)-2-hydroxy-3-oxobutyl phosphate is bound at residue Arg133.

Homopentamer.

The enzyme catalyses (2S)-2-hydroxy-3-oxobutyl phosphate + 5-amino-6-(D-ribitylamino)uracil = 6,7-dimethyl-8-(1-D-ribityl)lumazine + phosphate + 2 H2O + H(+). The protein operates within cofactor biosynthesis; riboflavin biosynthesis; riboflavin from 2-hydroxy-3-oxobutyl phosphate and 5-amino-6-(D-ribitylamino)uracil: step 1/2. Its activity is regulated as follows. Competitively inhibited by riboflavin (Ki of 17 uM). Its function is as follows. Catalyzes the formation of 6,7-dimethyl-8-ribityllumazine by condensation of 5-amino-6-(D-ribitylamino)uracil with 3,4-dihydroxy-2-butanone 4-phosphate. This is the penultimate step in the biosynthesis of riboflavin. Also binds riboflavin with an unexpected high affinity. The protein is 6,7-dimethyl-8-ribityllumazine synthase (rib4) of Schizosaccharomyces pombe (strain 972 / ATCC 24843) (Fission yeast).